The chain runs to 240 residues: Ribonuclease PH (240 aa).

Phosphate is bound by residues R87 and 125-127 (GTR).

This sequence belongs to the RNase PH family. In terms of assembly, homohexameric ring arranged as a trimer of dimers.

The catalysed reaction is tRNA(n+1) + phosphate = tRNA(n) + a ribonucleoside 5'-diphosphate. In terms of biological role, phosphorolytic 3'-5' exoribonuclease that plays an important role in tRNA 3'-end maturation. Removes nucleotide residues following the 3'-CCA terminus of tRNAs; can also add nucleotides to the ends of RNA molecules by using nucleoside diphosphates as substrates, but this may not be physiologically important. Probably plays a role in initiation of 16S rRNA degradation (leading to ribosome degradation) during starvation. This is Ribonuclease PH from Dictyoglomus turgidum (strain DSM 6724 / Z-1310).